The following is a 93-amino-acid chain: Acylphosphatase (93 aa).

Residues Arg6 to His93 enclose the Acylphosphatase-like domain. Active-site residues include Arg21 and Asn39.

The protein belongs to the acylphosphatase family.

The enzyme catalyses an acyl phosphate + H2O = a carboxylate + phosphate + H(+). This is Acylphosphatase (acyP) from Anaeromyxobacter sp. (strain Fw109-5).